Reading from the N-terminus, the 162-residue chain is NADH-quinone oxidoreductase subunit I (162 aa).

4Fe-4S ferredoxin-type domains follow at residues 53 to 83 (LRRY…IEPE) and 93 to 122 (RRYD…EGPN). The [4Fe-4S] cluster site is built by Cys63, Cys66, Cys69, Cys73, Cys102, Cys105, Cys108, and Cys112.

It belongs to the complex I 23 kDa subunit family. As to quaternary structure, NDH-1 is composed of 14 different subunits. Subunits NuoA, H, J, K, L, M, N constitute the membrane sector of the complex. [4Fe-4S] cluster is required as a cofactor.

Its subcellular location is the cell inner membrane. The enzyme catalyses a quinone + NADH + 5 H(+)(in) = a quinol + NAD(+) + 4 H(+)(out). Functionally, NDH-1 shuttles electrons from NADH, via FMN and iron-sulfur (Fe-S) centers, to quinones in the respiratory chain. The immediate electron acceptor for the enzyme in this species is believed to be ubiquinone. Couples the redox reaction to proton translocation (for every two electrons transferred, four hydrogen ions are translocated across the cytoplasmic membrane), and thus conserves the redox energy in a proton gradient. This Paramagnetospirillum magneticum (strain ATCC 700264 / AMB-1) (Magnetospirillum magneticum) protein is NADH-quinone oxidoreductase subunit I.